We begin with the raw amino-acid sequence, 434 residues long: NFATC2-interacting protein (434 aa).

Disordered stretches follow at residues 1–63 (MGSP…TPAL) and 176–237 (GSED…RAYN). The segment covering 28 to 59 (GPQPCPKPRGPQPCPKPRGPQPCPKPRGPQPC) has biased composition (pro residues). The segment covering 228–237 (PVRRKGRAYN) has biased composition (basic residues). A Ubiquitin-like domain is found at 275–351 (PELTVKVRRG…IDCVVLSPPD (77 aa)).

It localises to the nucleus. It is found in the cytoplasm. Its function is as follows. Regulates the magnitude of NFAT-driven transcription of a specific subset of cytokine genes. This Xenopus tropicalis (Western clawed frog) protein is NFATC2-interacting protein (nfatc2ip).